A 660-amino-acid chain; its full sequence is Bifunctional polymyxin resistance protein ArnA (660 aa).

A formyltransferase ArnAFT region spans residues 1-304; that stretch reads MKAVIFAYHD…ALGLVKGALL (304 aa). H104 functions as the Proton donor; for formyltransferase activity in the catalytic mechanism. (6R)-10-formyltetrahydrofolate is bound by residues R114 and 136–140; that span reads TARAD. Positions 314–660 are dehydrogenase ArnADH; that stretch reads RRTRVLILGV…QTVDLPDAAQ (347 aa). NAD(+) contacts are provided by residues D347 and 368 to 369; that span reads DI. UDP-alpha-D-glucuronate contacts are provided by residues A393, Y398, and 432-433; that span reads TS. The active-site Proton acceptor; for decarboxylase activity is E434. UDP-alpha-D-glucuronate is bound by residues R460, N492, 526-535, and Y613; that span reads KLVDGGAQKR. The Proton donor; for decarboxylase activity role is filled by R619.

In the N-terminal section; belongs to the Fmt family. UDP-L-Ara4N formyltransferase subfamily. This sequence in the C-terminal section; belongs to the NAD(P)-dependent epimerase/dehydratase family. UDP-glucuronic acid decarboxylase subfamily. As to quaternary structure, homohexamer, formed by a dimer of trimers.

The enzyme catalyses UDP-alpha-D-glucuronate + NAD(+) = UDP-beta-L-threo-pentopyranos-4-ulose + CO2 + NADH. The catalysed reaction is UDP-4-amino-4-deoxy-beta-L-arabinose + (6R)-10-formyltetrahydrofolate = UDP-4-deoxy-4-formamido-beta-L-arabinose + (6S)-5,6,7,8-tetrahydrofolate + H(+). The protein operates within nucleotide-sugar biosynthesis; UDP-4-deoxy-4-formamido-beta-L-arabinose biosynthesis; UDP-4-deoxy-4-formamido-beta-L-arabinose from UDP-alpha-D-glucuronate: step 1/3. Its pathway is nucleotide-sugar biosynthesis; UDP-4-deoxy-4-formamido-beta-L-arabinose biosynthesis; UDP-4-deoxy-4-formamido-beta-L-arabinose from UDP-alpha-D-glucuronate: step 3/3. It functions in the pathway bacterial outer membrane biogenesis; lipopolysaccharide biosynthesis. Bifunctional enzyme that catalyzes the oxidative decarboxylation of UDP-glucuronic acid (UDP-GlcUA) to UDP-4-keto-arabinose (UDP-Ara4O) and the addition of a formyl group to UDP-4-amino-4-deoxy-L-arabinose (UDP-L-Ara4N) to form UDP-L-4-formamido-arabinose (UDP-L-Ara4FN). The modified arabinose is attached to lipid A and is required for resistance to polymyxin and cationic antimicrobial peptides. The polypeptide is Bifunctional polymyxin resistance protein ArnA (Sodalis glossinidius (strain morsitans)).